The sequence spans 312 residues: Ribosomal protein L11 methyltransferase (312 aa).

S-adenosyl-L-methionine contacts are provided by T162, G183, D205, and N248.

This sequence belongs to the methyltransferase superfamily. PrmA family.

The protein resides in the cytoplasm. It carries out the reaction L-lysyl-[protein] + 3 S-adenosyl-L-methionine = N(6),N(6),N(6)-trimethyl-L-lysyl-[protein] + 3 S-adenosyl-L-homocysteine + 3 H(+). Functionally, methylates ribosomal protein L11. The polypeptide is Ribosomal protein L11 methyltransferase (Bacillus cytotoxicus (strain DSM 22905 / CIP 110041 / 391-98 / NVH 391-98)).